Here is a 120-residue protein sequence, read N- to C-terminus: Ribonuclease P protein component (120 aa).

The protein belongs to the RnpA family. As to quaternary structure, consists of a catalytic RNA component (M1 or rnpB) and a protein subunit.

The enzyme catalyses Endonucleolytic cleavage of RNA, removing 5'-extranucleotides from tRNA precursor.. Functionally, RNaseP catalyzes the removal of the 5'-leader sequence from pre-tRNA to produce the mature 5'-terminus. It can also cleave other RNA substrates such as 4.5S RNA. The protein component plays an auxiliary but essential role in vivo by binding to the 5'-leader sequence and broadening the substrate specificity of the ribozyme. This chain is Ribonuclease P protein component, found in Dehalococcoides mccartyi (strain ATCC BAA-2266 / KCTC 15142 / 195) (Dehalococcoides ethenogenes (strain 195)).